Here is a 242-residue protein sequence, read N- to C-terminus: Ubiquinone biosynthesis O-methyltransferase (242 aa).

4 residues coordinate S-adenosyl-L-methionine: R44, G64, D85, and M129.

Belongs to the methyltransferase superfamily. UbiG/COQ3 family.

The enzyme catalyses a 3-demethylubiquinol + S-adenosyl-L-methionine = a ubiquinol + S-adenosyl-L-homocysteine + H(+). The catalysed reaction is a 3-(all-trans-polyprenyl)benzene-1,2-diol + S-adenosyl-L-methionine = a 2-methoxy-6-(all-trans-polyprenyl)phenol + S-adenosyl-L-homocysteine + H(+). It participates in cofactor biosynthesis; ubiquinone biosynthesis. In terms of biological role, O-methyltransferase that catalyzes the 2 O-methylation steps in the ubiquinone biosynthetic pathway. The sequence is that of Ubiquinone biosynthesis O-methyltransferase from Salmonella agona (strain SL483).